A 66-amino-acid polypeptide reads, in one-letter code: Large ribosomal subunit protein bL35 (66 aa).

Basic residues predominate over residues 1 to 16 (MPKQKTHRASAKRFKR). Positions 1-21 (MPKQKTHRASAKRFKRTGNGG) are disordered.

Belongs to the bacterial ribosomal protein bL35 family.

The polypeptide is Large ribosomal subunit protein bL35 (Lactococcus lactis subsp. cremoris (strain MG1363)).